We begin with the raw amino-acid sequence, 708 residues long: Glycogen [starch] synthase isoform 1 (708 aa).

Arg20 is a UDP binding site. Position 159 is a phosphoserine (Ser159). 2 residues coordinate UDP-alpha-D-glucose: His193 and Arg199. Positions 280, 281, 283, 286, and 290 each coordinate alpha-D-glucose 6-phosphate. Arg320 is a binding site for UDP. Arg320 lines the UDP-alpha-D-glucose pocket. A Phosphoserine modification is found at Ser363. His500 serves as a coordination point for alpha-D-glucose 6-phosphate. Glu509, Trp511, and Gly512 together coordinate UDP-alpha-D-glucose. Residue Thr514 participates in UDP binding. Ser560 is subject to Phosphoserine. Alpha-D-glucose 6-phosphate-binding residues include Arg583 and Arg587. Phosphoserine occurs at positions 651 and 655. Ser660 and Ser662 each carry phosphoserine; by PKA. Positions Ser687 to Asn708 are disordered. Positions Asp693–Asn708 are enriched in acidic residues.

Belongs to the glycosyltransferase 3 family.

The catalysed reaction is [(1-&gt;4)-alpha-D-glucosyl](n) + UDP-alpha-D-glucose = [(1-&gt;4)-alpha-D-glucosyl](n+1) + UDP + H(+). Its pathway is glycan biosynthesis; glycogen biosynthesis. Allosteric activation by glucose-6-phosphate, and phosphorylation by a cAMP-dependent kinase. Glycogen synthase participates in the glycogen biosynthetic process along with glycogenin and glycogen branching enzyme. Extends the primer composed of a few glucose units formed by glycogenin by adding new glucose units to it. In this context, glycogen synthase transfers the glycosyl residue from UDP-Glc to the non-reducing end of alpha-1,4-glucan. The chain is Glycogen [starch] synthase isoform 1 (GSY1) from Saccharomyces cerevisiae (strain ATCC 204508 / S288c) (Baker's yeast).